A 178-amino-acid polypeptide reads, in one-letter code: Signaling threshold-regulating transmembrane adapter 1 (178 aa).

Residues 1 to 23 lie on the Extracellular side of the membrane; that stretch reads MSRENNCTTADLAWGIPSITQAW. N-linked (GlcNAc...) asparagine glycosylation occurs at asparagine 6. Residues 24–44 traverse the membrane as a helical; Signal-anchor for type III membrane protein segment; that stretch reads GLWALFGVVTMLLLISLAALL. The Cytoplasmic segment spans residues 45 to 178; it reads SQWTRGRRRT…AYANSQPAPS (134 aa). 2 positions are modified to phosphoserine: serine 62 and serine 65. Tyrosine 72 is subject to Phosphotyrosine. The tract at residues 72–75 is interaction with GRB2; that stretch reads YGNL. The segment at 81–102 is disordered; that stretch reads GRLSEESRSEEQDPSSGGLARG. A phosphoserine mark is found at serine 84, serine 87, and serine 89. Position 109 is a phosphotyrosine (tyrosine 109). Position 126 is a phosphothreonine (threonine 126). Residues 128–133 are interaction with PTPN11; it reads IKYCEV. 2 positions are modified to phosphotyrosine: tyrosine 130 and tyrosine 151. Residues 151-154 form an interaction with CSK region; it reads YASV. Serine 164 is subject to Phosphoserine. Tyrosine 170 is subject to Phosphotyrosine. The interval 170–173 is interaction with GRB2; it reads YANS.

In terms of assembly, homodimer; disulfide-linked. When phosphorylated, interacts with PTPN11/SHP2, GRB2 and CSK. Phosphorylated on tyrosines upon TCR activation; which promotes recruitment of PTPN11, GRB2 and CSK. As to expression, lymph node, spleen and thymus.

The protein localises to the cell membrane. Functionally, negatively regulates T-cell antigen receptor (TCR)-mediated signaling. Involved in positive selection of T-cells. The chain is Signaling threshold-regulating transmembrane adapter 1 (Sit1) from Rattus norvegicus (Rat).